Consider the following 455-residue polypeptide: T-box protein VegT-A (455 aa).

Disordered stretches follow at residues 21–40 (SNCA…SSQD), 229–262 (REQE…DSPE), and 295–346 (ANQG…EPSS). The T-box DNA-binding region spans 57-230 (LWSQFHQEGT…HNPFAKGFRE (174 aa)). Residues 229–241 (REQERSHKRDDVL) are compositionally biased toward basic and acidic residues. Over residues 308 to 324 (GANQEQQVPTSSSNFYN) the composition is skewed to polar residues.

In terms of assembly, forms a repression complex on the promoters of the nodal/nr1 and siamois genes with the maternal factors tcf7l1/tcf3 and pouf5.1/oct-25. Interacts (via C-terminus) with tcf7l1/tcf3 (via N-terminus). Also interacts with the other POU-domain transcription factors pou5f1.2/oct-91 and pou5f1.3/oct-60. In terms of tissue distribution, uniformly distributed in stage I oocytes but becomes localized to the vegetal hemisphere by stage II and remains so thereafter throughout oogenesis and the early embryonic cleavage stages. Zygotic expression parallels blastopore formation and shifts from dorsal expression in the marginal zone of late blastula and early gastrula stages to a ventral/lateral expression at the posterior end of later stage embryos. Expression is excluded from the notochord. In tailbud and tadpole stages, expressed exclusively in a subset of posterior Rohon-Beard neurons.

It localises to the nucleus. Its function is as follows. Transcription factor required for both mesoderm and endoderm formation in the embryo; signaling determinants and concentration levels may determine which germ layer is formed. Acts together with beta-catenin to activate genes that are responsible for mesoderm induction including wnt-8, eomes t/bra, siamois, mix1 and sox17. Directly binds to promoter DNA. Patterns the mesoderm along the dorsoventral and posterior axis. Activates siamois gene transcription when alone or in combination with beta-catenin, but inhibits siamois transcription in combination with pou5f1.1/oct-25. This chain is T-box protein VegT-A (vegt-a), found in Xenopus laevis (African clawed frog).